Here is a 361-residue protein sequence, read N- to C-terminus: dTDP-glucose 4,6-dehydratase 1 (361 aa).

Residues 11–12 (FI), 32–35 (DKLT), 58–59 (DI), 80–84 (LAAES), and threonine 99 contribute to the NAD(+) site. Serine 84 is a substrate binding site. Threonine 133 contacts substrate. The active-site Proton donor is the aspartate 134. Residues glutamate 135 and tyrosine 167 each act as proton acceptor in the active site. Residue 167-171 (YSASK) coordinates NAD(+). Position 196 (asparagine 196) interacts with substrate. Asparagine 197 serves as a coordination point for NAD(+). Substrate contacts are provided by residues 206–207 (KL), 222–224 (PIY), arginine 231, asparagine 266, and 296–300 (DRPGH).

Belongs to the NAD(P)-dependent epimerase/dehydratase family. dTDP-glucose dehydratase subfamily. As to quaternary structure, homodimer. NAD(+) serves as cofactor.

The enzyme catalyses dTDP-alpha-D-glucose = dTDP-4-dehydro-6-deoxy-alpha-D-glucose + H2O. The protein operates within carbohydrate biosynthesis; dTDP-L-rhamnose biosynthesis. Its pathway is bacterial outer membrane biogenesis; LPS O-antigen biosynthesis. Its function is as follows. Catalyzes the dehydration of dTDP-D-glucose to form dTDP-6-deoxy-D-xylo-4-hexulose via a three-step process involving oxidation, dehydration and reduction. The polypeptide is dTDP-glucose 4,6-dehydratase 1 (rfbB) (Escherichia coli (strain K12)).